Reading from the N-terminus, the 567-residue chain is Cytochrome P450 monooxygenase 79 (567 aa).

The chain crosses the membrane as a helical span at residues 7–24 (ELAILAIVLLVTAVVFYT). N-linked (GlcNAc...) asparagine glycosylation is found at N223 and N279. Residue C475 participates in heme binding.

The protein belongs to the cytochrome P450 family. It depends on heme as a cofactor.

The protein localises to the membrane. The protein operates within secondary metabolite biosynthesis. In terms of biological role, cytochrome P450 monooxygenase that is able to use dehydroabietic acid as a substrate for oxidation. The protein is Cytochrome P450 monooxygenase 79 of Postia placenta (strain ATCC 44394 / Madison 698-R) (Brown rot fungus).